The primary structure comprises 164 residues: Ribosome maturation factor RimM (164 aa).

Residues Asp93–Ile164 form the PRC barrel domain.

It belongs to the RimM family. Binds ribosomal protein uS19.

The protein resides in the cytoplasm. Its function is as follows. An accessory protein needed during the final step in the assembly of 30S ribosomal subunit, possibly for assembly of the head region. Essential for efficient processing of 16S rRNA. May be needed both before and after RbfA during the maturation of 16S rRNA. It has affinity for free ribosomal 30S subunits but not for 70S ribosomes. The chain is Ribosome maturation factor RimM from Orientia tsutsugamushi (strain Boryong) (Rickettsia tsutsugamushi).